The sequence spans 379 residues: Putative 8-amino-7-oxononanoate synthase (379 aa).

Arg18 lines the substrate pocket. Residue 106 to 107 coordinates pyridoxal 5'-phosphate; it reads GY. His130 is a substrate binding site. Residues Ser178, 204-207, and 235-238 contribute to the pyridoxal 5'-phosphate site; these read DEAH and TFGK. The residue at position 238 (Lys238) is an N6-(pyridoxal phosphate)lysine. Position 351 (Thr351) interacts with substrate.

It belongs to the class-II pyridoxal-phosphate-dependent aminotransferase family. BioF subfamily. As to quaternary structure, homodimer. Pyridoxal 5'-phosphate is required as a cofactor.

The catalysed reaction is 6-carboxyhexanoyl-[ACP] + L-alanine + H(+) = (8S)-8-amino-7-oxononanoate + holo-[ACP] + CO2. The protein operates within cofactor biosynthesis; biotin biosynthesis. Its function is as follows. Catalyzes the decarboxylative condensation of pimeloyl-[acyl-carrier protein] and L-alanine to produce 8-amino-7-oxononanoate (AON), [acyl-carrier protein], and carbon dioxide. This chain is Putative 8-amino-7-oxononanoate synthase (bioF), found in Haemophilus influenzae (strain 86-028NP).